Here is a 1427-residue protein sequence, read N- to C-terminus: Protein expanded (1427 aa).

Residues 26-399 form the FERM domain; that stretch reads RFLALRLLGQ…DTHQWSMKLA (374 aa). Positions 176–212 are disordered; that stretch reads GDAPPGTSNSKDDSGEETSASPSNGGRGLSATTTLPK. Over residues 192-211 the composition is skewed to polar residues; that stretch reads ETSASPSNGGRGLSATTTLP. 2 positions are modified to phosphotyrosine: Tyr227 and Tyr423. 2 disordered regions span residues 520–566 and 611–656; these read VRPQ…IGSQ and NSAL…SGVY. Residues 524-544 show a composition bias toward polar residues; sequence DASSNGATIVTNSSVQRNSMG. A compositionally biased stretch (low complexity) spans 545 to 559; it reads TTANDSSTATDSPSS. Tyr679 bears the Phosphotyrosine mark. Residues 688-710 are compositionally biased toward basic and acidic residues; it reads EETHVQHSDSVDGKKKEDFRPRS. Disordered regions lie at residues 688 to 732, 766 to 792, 815 to 880, 939 to 963, and 1000 to 1022; these read EETH…DNKH, YVTL…YSAR, APKP…SLKS, HNSN…HRHS, and LAPP…HPHL. Tyr766 is subject to Phosphotyrosine. The span at 818 to 838 shows a compositional bias: pro residues; it reads PDSPPCSPPVPPAPIPAPPPA. The short motif at 842-847 is the RXPPXY motif element; that stretch reads RDPPPY. Over residues 848 to 859 the composition is skewed to polar residues; the sequence is SISSKPRPTSLI. Over residues 860–877 the composition is skewed to low complexity; the sequence is SVSSSAHPAPSAAGSMSS. Positions 951-963 are enriched in basic residues; that stretch reads LHHHHVPSHHRHS. Residues 1001-1019 are compositionally biased toward pro residues; that stretch reads APPPPSLPRQPPPPPPPNH. The SH3-binding motif lies at 1008–1020; the sequence is PRQPPPPPPPNHP. At Tyr1103 the chain carries Phosphotyrosine. An SH3-binding motif is present at residues 1149–1157; sequence PPPPPPLHP. Residue Ser1181 is modified to Phosphoserine. Disordered regions lie at residues 1190-1267 and 1345-1398; these read DLLP…WAGE and TGQE…LPVQ. 2 stretches are compositionally biased toward pro residues: residues 1214–1230 and 1237–1246; these read PPMP…PSKP and PIPPRKPPTL. Composition is skewed to polar residues over residues 1253-1262 and 1345-1370; these read SPLTKTSSGA and TGQE…SSAG. Basic residues predominate over residues 1376–1388; it reads KARKGSTVSHRHP.

As to quaternary structure, forms a complex with Kibra and Mer. Interacts (via RXPPXY motif) with Kibra (via domain WW 1). Interacts with Mer and Hpo (via SARAH domain). Interacts with Schip1; the interaction results in recruitment of Schip1 to the apical cell membrane. Interacts with ack and yki. Post-translationally, phosphorylated by Ack at several tyrosines including Tyr-227, Tyr-423, Tyr-679, Tyr-766 and Tyr-1103.

It localises to the apical cell membrane. Functionally, activates the Hippo/SWH (Sav/Wts/Hpo) signaling pathway, a signaling pathway that plays a pivotal role in organ size control and tumor suppression by restricting proliferation and promoting apoptosis. The core of this pathway is composed of a kinase cascade wherein Hippo (Hpo), in complex with its regulatory protein Salvador (Sav), phosphorylates and activates Warts (Wts) in complex with its regulatory protein Mats, which in turn phosphorylates and inactivates the Yorkie (Yki) oncoprotein. Ex acts synergistically along with Mer and Kibra to regulate the Hippo signaling pathway. Involved in the control of cell proliferation in imaginal disks. May bind to certain proteins of signal transduction pathways by interaction with their SH3 domains. Required for apical localization of Schip1. This Drosophila melanogaster (Fruit fly) protein is Protein expanded (ex).